The primary structure comprises 133 residues: Small ribosomal subunit protein uS9 (133 aa).

The segment covering 102-113 has biased composition (basic and acidic residues); the sequence is KVEGYLSRDPRA. A disordered region spans residues 102 to 133; the sequence is KVEGYLSRDPRAKERRKYGLKKARKAPQFSKR. The span at 114–133 shows a compositional bias: basic residues; it reads KERRKYGLKKARKAPQFSKR.

Belongs to the universal ribosomal protein uS9 family.

This is Small ribosomal subunit protein uS9 from Gloeobacter violaceus (strain ATCC 29082 / PCC 7421).